A 198-amino-acid chain; its full sequence is Capsid protein (198 aa).

The protein localises to the virion. This chain is Capsid protein, found in Vitis vinifera (Grape).